We begin with the raw amino-acid sequence, 156 residues long: Small ribosomal subunit protein uS7 (156 aa).

This sequence belongs to the universal ribosomal protein uS7 family. Part of the 30S ribosomal subunit. Contacts proteins S9 and S11.

In terms of biological role, one of the primary rRNA binding proteins, it binds directly to 16S rRNA where it nucleates assembly of the head domain of the 30S subunit. Is located at the subunit interface close to the decoding center, probably blocks exit of the E-site tRNA. The polypeptide is Small ribosomal subunit protein uS7 (Methylorubrum extorquens (strain CM4 / NCIMB 13688) (Methylobacterium extorquens)).